The following is an 800-amino-acid chain: DNA topoisomerase 4 subunit A (800 aa).

The Topo IIA-type catalytic domain maps to 31–495 (LPDVRDGLKP…EIEEIKIDKE (465 aa)). Tyr119 functions as the O-(5'-phospho-DNA)-tyrosine intermediate in the catalytic mechanism.

It belongs to the type II topoisomerase GyrA/ParC subunit family. ParC type 2 subfamily. In terms of assembly, heterotetramer composed of ParC and ParE.

The protein localises to the cell membrane. The catalysed reaction is ATP-dependent breakage, passage and rejoining of double-stranded DNA.. Functionally, topoisomerase IV is essential for chromosome segregation. It relaxes supercoiled DNA. Performs the decatenation events required during the replication of a circular DNA molecule. The chain is DNA topoisomerase 4 subunit A from Staphylococcus aureus (strain Mu50 / ATCC 700699).